The chain runs to 145 residues: Phosphoribosyl-AMP cyclohydrolase (145 aa).

Asp87 lines the Mg(2+) pocket. Cys88 provides a ligand contact to Zn(2+). Positions 89 and 91 each coordinate Mg(2+). Positions 104 and 111 each coordinate Zn(2+).

Belongs to the PRA-CH family. As to quaternary structure, homodimer. Mg(2+) is required as a cofactor. Requires Zn(2+) as cofactor.

It localises to the cytoplasm. It carries out the reaction 1-(5-phospho-beta-D-ribosyl)-5'-AMP + H2O = 1-(5-phospho-beta-D-ribosyl)-5-[(5-phospho-beta-D-ribosylamino)methylideneamino]imidazole-4-carboxamide. The protein operates within amino-acid biosynthesis; L-histidine biosynthesis; L-histidine from 5-phospho-alpha-D-ribose 1-diphosphate: step 3/9. In terms of biological role, catalyzes the hydrolysis of the adenine ring of phosphoribosyl-AMP. The polypeptide is Phosphoribosyl-AMP cyclohydrolase (Nitrobacter winogradskyi (strain ATCC 25391 / DSM 10237 / CIP 104748 / NCIMB 11846 / Nb-255)).